The sequence spans 302 residues: Protein FdhE homolog (302 aa).

This sequence belongs to the FdhE family.

It is found in the cytoplasm. Necessary for formate dehydrogenase activity. This chain is Protein FdhE homolog, found in Shewanella oneidensis (strain ATCC 700550 / JCM 31522 / CIP 106686 / LMG 19005 / NCIMB 14063 / MR-1).